The following is a 402-amino-acid chain: Diaminopimelate decarboxylase (402 aa).

K45 carries the N6-(pyridoxal phosphate)lysine modification. Pyridoxal 5'-phosphate is bound by residues G224 and E259 to R262. Substrate is bound by residues R262, R298, and Y302. C327 functions as the Proton donor in the catalytic mechanism. Positions 328 and 356 each coordinate substrate. Y356 lines the pyridoxal 5'-phosphate pocket.

This sequence belongs to the Orn/Lys/Arg decarboxylase class-II family. LysA subfamily. In terms of assembly, homodimer. Pyridoxal 5'-phosphate serves as cofactor.

The enzyme catalyses meso-2,6-diaminopimelate + H(+) = L-lysine + CO2. It participates in amino-acid biosynthesis; L-lysine biosynthesis via DAP pathway; L-lysine from DL-2,6-diaminopimelate: step 1/1. Its function is as follows. Specifically catalyzes the decarboxylation of meso-diaminopimelate (meso-DAP) to L-lysine. The sequence is that of Diaminopimelate decarboxylase from Campylobacter jejuni subsp. jejuni serotype O:2 (strain ATCC 700819 / NCTC 11168).